The chain runs to 276 residues: Putative pyruvate, phosphate dikinase regulatory protein (276 aa).

152–159 (GISRTSKT) provides a ligand contact to ADP.

It belongs to the pyruvate, phosphate/water dikinase regulatory protein family. PDRP subfamily.

It carries out the reaction N(tele)-phospho-L-histidyl/L-threonyl-[pyruvate, phosphate dikinase] + ADP = N(tele)-phospho-L-histidyl/O-phospho-L-threonyl-[pyruvate, phosphate dikinase] + AMP + H(+). The enzyme catalyses N(tele)-phospho-L-histidyl/O-phospho-L-threonyl-[pyruvate, phosphate dikinase] + phosphate + H(+) = N(tele)-phospho-L-histidyl/L-threonyl-[pyruvate, phosphate dikinase] + diphosphate. Its function is as follows. Bifunctional serine/threonine kinase and phosphorylase involved in the regulation of the pyruvate, phosphate dikinase (PPDK) by catalyzing its phosphorylation/dephosphorylation. The polypeptide is Putative pyruvate, phosphate dikinase regulatory protein (Staphylococcus carnosus (strain TM300)).